The chain runs to 125 residues: MORF4 family-associated protein 1 (125 aa).

The interval 76–99 (ESALNHLQGAGGAEPRGPRAEKAD) is disordered. Positions 94–124 (RAEKADEKAQEMAKMAEMLVQLVRRIEKSES) form a coiled coil.

This sequence belongs to the MORF4 family-associated protein family. In terms of assembly, found in a complex composed of MORF4L1, MRFAP1 and RB1. Interacts via its N-terminus with MORF4L1. Interacts with CSTB and MORF4L2. As to expression, widely expressed in all tissues examined and as early as 7 days during embryonic development.

It is found in the nucleus. Its subcellular location is the cytoplasm. It localises to the perinuclear region. The sequence is that of MORF4 family-associated protein 1 from Mus musculus (Mouse).